Consider the following 275-residue polypeptide: Autophagy protein 5 (275 aa).

The residue at position 1 (M1) is an N-acetylmethionine. A Glycyl lysine isopeptide (Lys-Gly) (interchain with G-Cter in ATG12) cross-link involves residue K130.

This sequence belongs to the ATG5 family. In terms of assembly, forms a conjugate with ATG12. Part of the minor complex composed of 4 sets of ATG12-ATG5 and ATG16L1 (400 kDa); this complex interacts with ATG3 leading to disruption of ATG7 interaction and promotion of ATG8-like proteins lipidation. Forms an 800-kDa complex composed of ATG12-ATG5 and ATG16L2. The ATG12-ATG5 conjugate interacts with RAB33A; this interaction is bridged by ATG16L1 and promotes ATG12-ATG5-ATG16L1 complex recruitment to phagophores. Interacts with TECPR1; the interaction is direct and does not take place when ATG16L1 is associated with the ATG5-ATG12 conjugate. Interacts with DHX58/RIG-1, IFIH1/MDA5 and MAVS/IPS-1 in monomeric form as well as in ATG12-ATG5 conjugate form. The interaction with MAVS is further enhanced upon vesicular stomatitis virus (VSV) infection. Interacts with ATG3. Interacts with ATG7 and ATG10. Interacts with FADD. Interacts with Bassoon/BSN; this interaction is important for the regulation of presynaptic autophagy. Interacts with ATG16L2. In terms of processing, conjugated to ATG12; which is essential for autophagy, but is not required for association with isolation membrane. Post-translationally, acetylated by EP300.

It localises to the cytoplasm. The protein localises to the preautophagosomal structure membrane. In terms of biological role, involved in autophagic vesicle formation. Conjugation with ATG12, through a ubiquitin-like conjugating system involving ATG7 as an E1-like activating enzyme and ATG10 as an E2-like conjugating enzyme, is essential for its function. The ATG12-ATG5 conjugate acts as an E3-like enzyme which is required for lipidation of ATG8 family proteins and their association to the vesicle membranes. Involved in mitochondrial quality control after oxidative damage, and in subsequent cellular longevity. Plays a critical role in multiple aspects of lymphocyte development and is essential for both B and T lymphocyte survival and proliferation. Required for optimal processing and presentation of antigens for MHC II. Involved in the maintenance of axon morphology and membrane structures, as well as in normal adipocyte differentiation. Promotes primary ciliogenesis through removal of OFD1 from centriolar satellites and degradation of IFT20 via the autophagic pathway. As part of the ATG8 conjugation system with ATG12 and ATG16L1, required for recruitment of LRRK2 to stressed lysosomes and induction of LRRK2 kinase activity in response to lysosomal stress. Functionally, may play an important role in the apoptotic process, possibly within the modified cytoskeleton. Its expression is a relatively late event in the apoptotic process, occurring downstream of caspase activity. Plays a crucial role in IFN-gamma-induced autophagic cell death by interacting with FADD. The polypeptide is Autophagy protein 5 (Sus scrofa (Pig)).